The chain runs to 452 residues: MLHRATTTAAAAAAAALLLCPVQALVRPDGVGKLPALGWNSWNAFGCDIDEEKILTAANQIVNLGLKDLGYEYVNIDDCWSVKSGRNATTGRIMPDLTKFPDGISGLAEKIHNLGLKIGIYSSAGWTTCAGYPASLGNETIDAETFAEWGIDYLKYDNCGVPPDWQDQYSYCVPDSGDPATNPNGTCPNLQNPAPAVYDWRTSKTAERYRRMRDALLGVQDKRTILFSLCDWGQADVNEWGAETGNSWRMSGDISPNWPRISTIANLNSFELNSVDFWGHNDPDMLEVGNGNLTLAENRAHFALWAAMKSPLIIGTALDKIDQDHLSILSNKYLLTFHQDPQIGRPAYPYKWGYNPDWTFDPGHPAEYWSGPTSSGDVLVLMLNTESGPANRTAVWSEVPELKGRNNNNNSSSTGFQVTDAWTGSSLGCVQGGYSVELESHDVAVLVVSGEC.

A signal peptide spans 1-24 (MLHRATTTAAAAAAAALLLCPVQA). Cysteine 47 and cysteine 79 are disulfide-bonded. N-linked (GlcNAc...) asparagine glycosylation is found at asparagine 87 and asparagine 138. An intrachain disulfide couples cysteine 129 to cysteine 159. The Nucleophile role is filled by aspartate 157. A glycan (N-linked (GlcNAc...) asparagine) is linked at asparagine 184. 231 to 235 (DWGQA) serves as a coordination point for substrate. Residue aspartate 253 is the Proton donor of the active site. 4 N-linked (GlcNAc...) asparagine glycosylation sites follow: asparagine 292, asparagine 391, asparagine 409, and asparagine 410.

This sequence belongs to the glycosyl hydrolase 27 family.

Its subcellular location is the secreted. It catalyses the reaction Hydrolysis of terminal, non-reducing alpha-D-galactose residues in alpha-D-galactosides, including galactose oligosaccharides, galactomannans and galactolipids.. Hydrolyzes a variety of simple alpha-D-galactoside as well as more complex molecules such as oligosaccharides and polysaccharides. The polypeptide is Probable alpha-galactosidase B (Talaromyces emersonii (Thermophilic fungus)).